Reading from the N-terminus, the 704-residue chain is Ion-translocating oxidoreductase complex subunit C (704 aa).

4Fe-4S ferredoxin-type domains are found at residues 368–397 and 407–436; these read MGAP…QQLY and KATA…VQYF. The [4Fe-4S] cluster site is built by Cys-377, Cys-380, Cys-383, Cys-387, Cys-416, Cys-419, Cys-422, and Cys-426. The disordered stretch occupies residues 536-684; sequence RAKQAAHPMA…PADPRKAAVA (149 aa). Over residues 556 to 565 the composition is skewed to low complexity; it reads KAAVEAAIAR.

This sequence belongs to the 4Fe4S bacterial-type ferredoxin family. RnfC subfamily. In terms of assembly, the complex is composed of six subunits: RsxA, RsxB, RsxC, RsxD, RsxE and RsxG. Requires [4Fe-4S] cluster as cofactor.

Its subcellular location is the cell inner membrane. Its function is as follows. Part of a membrane-bound complex that couples electron transfer with translocation of ions across the membrane. Required to maintain the reduced state of SoxR. The chain is Ion-translocating oxidoreductase complex subunit C from Salmonella choleraesuis (strain SC-B67).